The primary structure comprises 676 residues: A-type ATP synthase subunit I (676 aa).

The next 8 helical transmembrane spans lie at 341-361 (VFIA…IGYG), 390-410 (AGVM…PFIV), 449-469 (ILLF…FALG), 490-510 (IIGV…VGVF), 538-558 (LNVY…LFVM), 564-584 (MGAM…QIMS), 590-610 (AIGL…MKLI), and 617-637 (IPIV…ILGI).

Belongs to the V-ATPase 116 kDa subunit family. As to quaternary structure, has multiple subunits with at least A(3), B(3), C, D, E, F, H, I and proteolipid K(x).

The protein localises to the cell membrane. Its function is as follows. Component of the A-type ATP synthase that produces ATP from ADP in the presence of a proton gradient across the membrane. This is A-type ATP synthase subunit I from Archaeoglobus fulgidus (strain ATCC 49558 / DSM 4304 / JCM 9628 / NBRC 100126 / VC-16).